Reading from the N-terminus, the 442-residue chain is UDP-N-acetylmuramoylalanine--D-glutamate ligase (442 aa).

109 to 115 provides a ligand contact to ATP; sequence GSNGKTT.

It belongs to the MurCDEF family.

The protein resides in the cytoplasm. It carries out the reaction UDP-N-acetyl-alpha-D-muramoyl-L-alanine + D-glutamate + ATP = UDP-N-acetyl-alpha-D-muramoyl-L-alanyl-D-glutamate + ADP + phosphate + H(+). The protein operates within cell wall biogenesis; peptidoglycan biosynthesis. In terms of biological role, cell wall formation. Catalyzes the addition of glutamate to the nucleotide precursor UDP-N-acetylmuramoyl-L-alanine (UMA). This chain is UDP-N-acetylmuramoylalanine--D-glutamate ligase, found in Solibacter usitatus (strain Ellin6076).